We begin with the raw amino-acid sequence, 405 residues long: L-rhamnonate dehydratase (405 aa).

Substrate contacts are provided by His-33 and Arg-59. Mg(2+)-binding residues include Asp-226, Glu-252, and Glu-280. The active-site Proton acceptor is the His-329. Residue Glu-349 coordinates substrate.

It belongs to the mandelate racemase/muconate lactonizing enzyme family. RhamD subfamily. Homooctamer; tetramer of dimers. The cofactor is Mg(2+).

It catalyses the reaction L-rhamnonate = 2-dehydro-3-deoxy-L-rhamnonate + H2O. Functionally, catalyzes the dehydration of L-rhamnonate to 2-keto-3-deoxy-L-rhamnonate (KDR). In Salmonella paratyphi C (strain RKS4594), this protein is L-rhamnonate dehydratase.